Reading from the N-terminus, the 129-residue chain is Large ribosomal subunit protein bL20 (129 aa).

This sequence belongs to the bacterial ribosomal protein bL20 family.

Its function is as follows. Binds directly to 23S ribosomal RNA and is necessary for the in vitro assembly process of the 50S ribosomal subunit. It is not involved in the protein synthesizing functions of that subunit. This Mycobacterium tuberculosis (strain ATCC 25177 / H37Ra) protein is Large ribosomal subunit protein bL20.